A 70-amino-acid polypeptide reads, in one-letter code: Small ribosomal subunit protein bS21A (70 aa).

It belongs to the bacterial ribosomal protein bS21 family.

The chain is Small ribosomal subunit protein bS21A from Paraburkholderia xenovorans (strain LB400).